Here is a 253-residue protein sequence, read N- to C-terminus: Molybdate import ATP-binding protein MolC (253 aa).

The ABC transporter domain occupies 5-229 (LSVENLGFYY…NLTALFHLPM (225 aa)). Residue 38 to 45 (GQNGCGKS) participates in ATP binding.

The protein belongs to the ABC transporter superfamily. As to quaternary structure, the complex is composed of two ATP-binding proteins (MolC), two transmembrane proteins (MolB) and a solute-binding protein (MolA).

The protein resides in the cell inner membrane. It catalyses the reaction molybdate(out) + ATP + H2O = molybdate(in) + ADP + phosphate + H(+). With respect to regulation, the MolBCA complex shows a decrease in affinity in the presence of increasing concentrations of substrate and nucleotide. In terms of biological role, part of the ABC transporter complex MolBCA involved in molybdate import. Responsible for energy coupling to the transport system. Functions as a low-affinity molybdate transporter. In Haemophilus influenzae (strain ATCC 51907 / DSM 11121 / KW20 / Rd), this protein is Molybdate import ATP-binding protein MolC.